The primary structure comprises 122 residues: Small ribosomal subunit protein uS13 (122 aa).

Residues 95-116 are compositionally biased toward basic residues; that stretch reads GLPVRGQKTKTNARTRKGRRKT. The tract at residues 95–122 is disordered; sequence GLPVRGQKTKTNARTRKGRRKTVGAATK.

Belongs to the universal ribosomal protein uS13 family. In terms of assembly, part of the 30S ribosomal subunit. Forms a loose heterodimer with protein S19. Forms two bridges to the 50S subunit in the 70S ribosome.

In terms of biological role, located at the top of the head of the 30S subunit, it contacts several helices of the 16S rRNA. In the 70S ribosome it contacts the 23S rRNA (bridge B1a) and protein L5 of the 50S subunit (bridge B1b), connecting the 2 subunits; these bridges are implicated in subunit movement. Contacts the tRNAs in the A and P-sites. The sequence is that of Small ribosomal subunit protein uS13 from Campylobacter concisus (strain 13826).